A 418-amino-acid chain; its full sequence is Metacaspase-2 (418 aa).

Positions 68-113 (PSPYTHAPHAPSPFNHAPPDSYPFTHAPPASSPFNHAPPGPPPPVH) are disordered. Positions 70 to 80 (PYTHAPHAPSP) are enriched in low complexity. Residues 103 to 112 (HAPPGPPPPV) show a composition bias toward pro residues. Catalysis depends on residues H200 and C256. A disordered region spans residues 385 to 406 (PDEEEEVNQAPQKTQEPQLSAN). A compositionally biased stretch (polar residues) spans 393–405 (QAPQKTQEPQLSA).

The protein belongs to the peptidase C14B family.

Functionally, acts as a negative regulator of oxidative stress cell death and hypersensitive cell death response mediated by immune response. Acts via indirect or direct regulation of AMC1 at postranscriptional level. In Arabidopsis thaliana (Mouse-ear cress), this protein is Metacaspase-2 (AMC2).